We begin with the raw amino-acid sequence, 453 residues long: Tubulin alpha-1/2/3 chain (453 aa).

Glutamine 11 provides a ligand contact to GTP. Lysine 40 is modified (N6-acetyllysine). GTP-binding residues include glutamate 71, serine 140, glycine 144, threonine 145, threonine 179, asparagine 206, and asparagine 228. Position 71 (glutamate 71) interacts with Mg(2+). Glutamate 254 is an active-site residue. Residues 429-453 (EKDYEEVGTESQEGDGEEGEDGGDQ) form a disordered region. Positions 431-453 (DYEEVGTESQEGDGEEGEDGGDQ) are enriched in acidic residues.

Belongs to the tubulin family. Dimer of alpha and beta chains. A typical microtubule is a hollow water-filled tube with an outer diameter of 25 nm and an inner diameter of 15 nM. Alpha-beta heterodimers associate head-to-tail to form protofilaments running lengthwise along the microtubule wall with the beta-tubulin subunit facing the microtubule plus end conferring a structural polarity. Microtubules usually have 13 protofilaments but different protofilament numbers can be found in some organisms and specialized cells. The cofactor is Mg(2+). Post-translationally, acetylation of alpha chains at Lys-40 stabilizes microtubules and affects affinity and processivity of microtubule motors. This modification has a role in multiple cellular functions, ranging from cell motility, cell cycle progression or cell differentiation to intracellular trafficking and signaling.

It localises to the cytoplasm. Its subcellular location is the cytoskeleton. It carries out the reaction GTP + H2O = GDP + phosphate + H(+). In terms of biological role, tubulin is the major constituent of microtubules, a cylinder consisting of laterally associated linear protofilaments composed of alpha- and beta-tubulin heterodimers. Microtubules grow by the addition of GTP-tubulin dimers to the microtubule end, where a stabilizing cap forms. Below the cap, tubulin dimers are in GDP-bound state, owing to GTPase activity of alpha-tubulin. The polypeptide is Tubulin alpha-1/2/3 chain (TBA1) (Naegleria gruberi (Amoeba)).